We begin with the raw amino-acid sequence, 108 residues long: DNA-directed RNA polymerase subunit omega (108 aa).

This sequence belongs to the RNA polymerase subunit omega family. The RNAP catalytic core consists of 2 alpha, 1 beta, 1 beta' and 1 omega subunit. When a sigma factor is associated with the core the holoenzyme is formed, which can initiate transcription.

It catalyses the reaction RNA(n) + a ribonucleoside 5'-triphosphate = RNA(n+1) + diphosphate. Its function is as follows. Promotes RNA polymerase assembly. Latches the N- and C-terminal regions of the beta' subunit thereby facilitating its interaction with the beta and alpha subunits. The sequence is that of DNA-directed RNA polymerase subunit omega from Mycolicibacterium paratuberculosis (strain ATCC BAA-968 / K-10) (Mycobacterium paratuberculosis).